The chain runs to 318 residues: Tyrosine recombinase XerC (318 aa).

The 92-residue stretch at 17–108 folds into the Core-binding (CB) domain; the sequence is PEVMAERRRW…GLRSFLRYLE (92 aa). Residues 129–312 form the Tyr recombinase domain; the sequence is SLPKALTDRE…DSARLLEIYD (184 aa). Active-site residues include R172, K196, H264, R267, and H290. Y299 acts as the O-(3'-phospho-DNA)-tyrosine intermediate in catalysis.

This sequence belongs to the 'phage' integrase family. XerC subfamily. In terms of assembly, forms a cyclic heterotetrameric complex composed of two molecules of XerC and two molecules of XerD.

Its subcellular location is the cytoplasm. Site-specific tyrosine recombinase, which acts by catalyzing the cutting and rejoining of the recombining DNA molecules. The XerC-XerD complex is essential to convert dimers of the bacterial chromosome into monomers to permit their segregation at cell division. It also contributes to the segregational stability of plasmids. This chain is Tyrosine recombinase XerC, found in Rhizobium meliloti (strain 1021) (Ensifer meliloti).